We begin with the raw amino-acid sequence, 822 residues long: MEFNKLELLIIRALKLNTNSNKKNSFYNKFLNLRNKVLNIQKNSLDQPSDAPSNNKKRNLDQPDNPNQKEPGKARKIIWSFIIIILVLGVLALIILSGFSFSATSLNAASFTENGTSSFKITTNTNQTRTIGGAPSTIYQRDSTLYVIYIENSFSGYYYSAIITDISVSNNTASVGNGSNTTGGSTSNLQKGLQIANLLVDGSGNVYKNKDNNGSTTSGTTTFSLNSNLTSAMKLQGWSSNQSMSLPTSYSFYTAASLVLSILPFILLIGIIYYSMRKMGQAGGGQDNVFSIGKSQAKLAKSTVLFSDVAGIEEEKEELIEIVDYLKRPDRYAAMGARVPKGVILYGPPGTGKTLLAKAVAGEAKVPFFQVSGSAFEDMLVGVGAKRVRDLFNKAVKSAPAIIFIDEIDSVGSKRGKFETTAGSLADQTLNQLLAEMDGFNTKTGVIVMAATNRLDVLDDALLRPGRFDRHIQVNLPDIKERVAILKIHSRNKNISETVDLEDIARRTPGFSGAQLENVLNEATLLAVRRNKKSIYTEELDEAIDRVIAGPAKKTRVISLEEKRQIAFHEAGHAIVGMYTKGSEVVEKITIIPRGQAAGYTLSVPEIQELSIQKKSDLLGMVAGLLGGRASEEINFGKEFISTGAANDLYKATNIVRAMVTQFGMSPNVGLAQYYPSEGTVNPYQSKNFSESTSQLIDKEIERIFKERYEYAYKIIKEHNKEVELIVESLLLLETIVKPQIDFIHKYKQLPKEALEKKKELEEKKKAEDLIRKAKKESEASSKEEKEMDVEKKVQKPSASSTEPTSKPKKAPSKESSSDKKK.

Residues 1 to 76 are Cytoplasmic-facing; it reads MEFNKLELLI…NQKEPGKARK (76 aa). Residues 44-54 show a composition bias toward polar residues; it reads SLDQPSDAPSN. A disordered region spans residues 44-71; sequence SLDQPSDAPSNNKKRNLDQPDNPNQKEP. A helical transmembrane segment spans residues 77–97; that stretch reads IIWSFIIIILVLGVLALIILS. Topologically, residues 98–251 are extracellular; sequence GFSFSATSLN…QSMSLPTSYS (154 aa). A helical transmembrane segment spans residues 252 to 272; the sequence is FYTAASLVLSILPFILLIGII. Over 273 to 822 the chain is Cytoplasmic; the sequence is YYSMRKMGQA…SKESSSDKKK (550 aa). 347–354 is an ATP binding site; that stretch reads GPPGTGKT. Histidine 569 lines the Zn(2+) pocket. Residue glutamate 570 is part of the active site. Zn(2+)-binding residues include histidine 573 and aspartate 648. The span at 758–794 shows a compositional bias: basic and acidic residues; that stretch reads KKELEEKKKAEDLIRKAKKESEASSKEEKEMDVEKKV. The segment at 758-822 is disordered; that stretch reads KKELEEKKKA…SKESSSDKKK (65 aa). Over residues 796–805 the composition is skewed to low complexity; that stretch reads KPSASSTEPT. Over residues 812-822 the composition is skewed to basic and acidic residues; it reads PSKESSSDKKK.

The protein in the central section; belongs to the AAA ATPase family. This sequence in the C-terminal section; belongs to the peptidase M41 family. As to quaternary structure, homohexamer. Zn(2+) is required as a cofactor.

It is found in the cell membrane. Functionally, acts as a processive, ATP-dependent zinc metallopeptidase for both cytoplasmic and membrane proteins. Plays a role in the quality control of integral membrane proteins. This chain is ATP-dependent zinc metalloprotease FtsH, found in Malacoplasma penetrans (strain HF-2) (Mycoplasma penetrans).